A 922-amino-acid chain; its full sequence is Two-component sensor PprA (922 aa).

Low complexity predominate over residues 1 to 10 (MFEFSRSSSA). Residues 1-22 (MFEFSRSSSAEAERPEPFSQEG) form a disordered region. A PAC 1 domain is found at 506–558 (VKTRYRLADGQGNWHWLYDEAKLLRDAQGLPSEAVGLWLDVTEQHLAAQRIAE). Residues 559 to 622 (SEERYRVLVE…EDASALRARL (64 aa)) form the PAS domain. The region spanning 632-684 (EVPELRFNLPGQRFLWLVWAERPLFDARGELCEVQAVGRDNTPVRRAQQQLAQ) is the PAC 2 domain. Residues 697 to 916 (GLAHEVKQPL…LFVVRLPLAA (220 aa)) enclose the Histidine kinase domain. Phosphohistidine; by autocatalysis is present on histidine 700.

Post-translationally, autophosphorylated.

The enzyme catalyses ATP + protein L-histidine = ADP + protein N-phospho-L-histidine.. Functionally, member of the two-component regulatory system PprA/PprB involved in biofilm formation by controlling the expression of many related genes including type IVb pili major subunit flp pilin, adhesin bapA or cupE fimbriae. Functions as a heme sensor histidine kinase which is autophosphorylated at a histidine residue and transfers its phosphate group to PprB. In Pseudomonas aeruginosa (strain ATCC 15692 / DSM 22644 / CIP 104116 / JCM 14847 / LMG 12228 / 1C / PRS 101 / PAO1), this protein is Two-component sensor PprA.